Reading from the N-terminus, the 255-residue chain is 4-hydroxy-tetrahydrodipicolinate reductase (255 aa).

NAD(+) contacts are provided by residues 9-14, 89-91, and 115-118; these read GFKGKM, GTT, and APNF. Histidine 145 (proton donor/acceptor) is an active-site residue. Histidine 146 lines the (S)-2,3,4,5-tetrahydrodipicolinate pocket. The Proton donor role is filled by lysine 149. Position 155-156 (155-156) interacts with (S)-2,3,4,5-tetrahydrodipicolinate; it reads GT.

It belongs to the DapB family.

It localises to the cytoplasm. It carries out the reaction (S)-2,3,4,5-tetrahydrodipicolinate + NAD(+) + H2O = (2S,4S)-4-hydroxy-2,3,4,5-tetrahydrodipicolinate + NADH + H(+). The enzyme catalyses (S)-2,3,4,5-tetrahydrodipicolinate + NADP(+) + H2O = (2S,4S)-4-hydroxy-2,3,4,5-tetrahydrodipicolinate + NADPH + H(+). It functions in the pathway amino-acid biosynthesis; L-lysine biosynthesis via DAP pathway; (S)-tetrahydrodipicolinate from L-aspartate: step 4/4. Catalyzes the conversion of 4-hydroxy-tetrahydrodipicolinate (HTPA) to tetrahydrodipicolinate. The chain is 4-hydroxy-tetrahydrodipicolinate reductase from Streptococcus gordonii (strain Challis / ATCC 35105 / BCRC 15272 / CH1 / DL1 / V288).